The following is a 398-amino-acid chain: MMGNKKIVLAYSGGLDTSVAVKWLTDKGFDVIADCMDVGEGKDLNFIHDKALQVGAVESVVLDCKEEFAKIFVGAALKGNLMYENKYPLVSALSRPLIAQKLVEVAKEKGATAIAHGCTGKGNDQVRFEVAIHSLAPELEVIAPVREWHWAREEEIEYANQNGVPIPADLDNPYSIDMNLWGRAIEAGVLENPWNTCPEDAFFMTNSVENAPNEAEFIEVEFKEGLPIALNGKSLELHEIIKKVNIIAGKHGIGRIDHIENRLVGIKSREFYECPAAITLLKAHKDLEDLTFVRELAHFKPVLENELANLIYNGLWFNPATKALIAYLDETQKVVNGIVKIKLYKGLATPVGRKSTNSLYSEKLATYTAADEFDQAAAVGFIKLWGLPTQVNAQVNLK.

10–18 provides a ligand contact to ATP; that stretch reads AYSGGLDTS. Residue tyrosine 87 participates in L-citrulline binding. ATP is bound at residue glycine 117. 3 residues coordinate L-aspartate: threonine 119, asparagine 123, and aspartate 124. Asparagine 123 contributes to the L-citrulline binding site. Residues arginine 127, serine 175, glutamate 260, and tyrosine 272 each coordinate L-citrulline.

The protein belongs to the argininosuccinate synthase family. Type 1 subfamily. As to quaternary structure, homotetramer.

The protein localises to the cytoplasm. The catalysed reaction is L-citrulline + L-aspartate + ATP = 2-(N(omega)-L-arginino)succinate + AMP + diphosphate + H(+). It functions in the pathway amino-acid biosynthesis; L-arginine biosynthesis; L-arginine from L-ornithine and carbamoyl phosphate: step 2/3. This chain is Argininosuccinate synthase, found in Lactococcus lactis subsp. lactis (strain IL1403) (Streptococcus lactis).